A 590-amino-acid polypeptide reads, in one-letter code: Zinc finger protein 285 (590 aa).

The KRAB domain maps to 8 to 86 (VTFKDVAVVF…WKQRIRDLTV (79 aa)). A C2H2-type 1 zinc finger spans residues 232–254 (FPCNNCGVAFADDTDPHVHHSTH). Residues 260-282 (YKCDQYGKNFSQSQDLIVHCKTH) form a C2H2-type 2; degenerate zinc finger. C2H2-type zinc fingers lie at residues 316–338 (YKCK…HRVH), 344–366 (YKCD…QGVH), 372–394 (YKCE…QRVH), 400–422 (YKCS…WRFH), 428–450 (YRCG…QRVH), 456–478 (YKCN…QRVH), 484–506 (YKCE…QRDH), 512–534 (YKCD…LRVH), and 540–562 (YKCK…QRVH).

Belongs to the krueppel C2H2-type zinc-finger protein family.

It is found in the nucleus. May be involved in transcriptional regulation. This Homo sapiens (Human) protein is Zinc finger protein 285 (ZNF285).